The primary structure comprises 81 residues: EC protein I/II (81 aa).

Belongs to the metallothionein superfamily. Type 15 family.

In terms of biological role, binds 5 molecules of zinc. May have a role in Zn(2+) homeostasis during embryogenesis. The protein is EC protein I/II of Triticum aestivum (Wheat).